Reading from the N-terminus, the 221-residue chain is Protein-L-isoaspartate O-methyltransferase (221 aa).

S70 is an active-site residue.

This sequence belongs to the methyltransferase superfamily. L-isoaspartyl/D-aspartyl protein methyltransferase family.

The protein localises to the cytoplasm. It catalyses the reaction [protein]-L-isoaspartate + S-adenosyl-L-methionine = [protein]-L-isoaspartate alpha-methyl ester + S-adenosyl-L-homocysteine. Its function is as follows. Catalyzes the methyl esterification of L-isoaspartyl residues in peptides and proteins that result from spontaneous decomposition of normal L-aspartyl and L-asparaginyl residues. It plays a role in the repair and/or degradation of damaged proteins. In Alkalilimnicola ehrlichii (strain ATCC BAA-1101 / DSM 17681 / MLHE-1), this protein is Protein-L-isoaspartate O-methyltransferase.